The following is a 314-amino-acid chain: tRNA dimethylallyltransferase (314 aa).

13-20 (GPTAVGKT) lines the ATP pocket. A substrate-binding site is contributed by 15-20 (TAVGKT). The segment at 38–41 (DSMQ) is interaction with substrate tRNA.

The protein belongs to the IPP transferase family. As to quaternary structure, monomer. Requires Mg(2+) as cofactor.

The catalysed reaction is adenosine(37) in tRNA + dimethylallyl diphosphate = N(6)-dimethylallyladenosine(37) in tRNA + diphosphate. In terms of biological role, catalyzes the transfer of a dimethylallyl group onto the adenine at position 37 in tRNAs that read codons beginning with uridine, leading to the formation of N6-(dimethylallyl)adenosine (i(6)A). The sequence is that of tRNA dimethylallyltransferase from Bacillus velezensis (strain DSM 23117 / BGSC 10A6 / LMG 26770 / FZB42) (Bacillus amyloliquefaciens subsp. plantarum).